The following is a 479-amino-acid chain: Transmembrane protein 161A (479 aa).

A signal peptide spans 1-28; it reads MAVLGVQLVVTLLTATLMHRLAPHCSFA. Over 29–98 the chain is Extracellular; that stretch reads RWLLCNGSLF…LTTVDALVLR (70 aa). N34 carries N-linked (GlcNAc...) asparagine glycosylation. S69 is modified (phosphoserine). A helical transmembrane segment spans residues 99–119; the sequence is FFLEYQWFVDFAVYSGGVYLF. Residues 120–134 are Cytoplasmic-facing; sequence TEAYYYMLGPAKETN. The helical transmembrane segment at 135 to 155 threads the bilayer; the sequence is IAVFWCLLTVTFSIKMFLTVT. Residues 156–166 lie on the Extracellular side of the membrane; sequence RLYFSAEEGGE. The chain crosses the membrane as a helical span at residues 167 to 187; it reads RSVCLTFAFLFLLLAMLVQVV. At 188–224 the chain is on the cytoplasmic side; that stretch reads REETLELGLEPGLASMTQNLEPLLKKQGWDWALPVAK. The helical transmembrane segment at 225 to 245 threads the bilayer; the sequence is LAIRVGLAVVGSVLGAFLTFP. Residues 246–263 are Extracellular-facing; it reads GLRLAQTHRDALTMSEDR. Residues 264-284 traverse the membrane as a helical segment; the sequence is PMLQFLLHTSFLSPLFILWLW. At 285–304 the chain is on the cytoplasmic side; it reads TKPIARDFLHQPPFGETRFS. A helical membrane pass occupies residues 305–325; sequence LLSDSAFDSGRLWLLVVLCLL. At 326–370 the chain is on the extracellular side; sequence RLAVTRPHLQAYLCLAKARVEQLRREAGRIEAREIQQRVVRVYCY. A helical transmembrane segment spans residues 371 to 391; it reads VTVVSLQYLTPLILTLNCTLL. The Cytoplasmic portion of the chain corresponds to 392-449; sequence LKTLGGYSWGLGPAPLLSPDPSSASAAPIGSGEDEVQQTAARIAGALGGLLTPLFLRG. Residues 450–470 form a helical membrane-spanning segment; that stretch reads VLAYLIWWTAACQLLASLFGL. Over 471 to 479 the chain is Extracellular; the sequence is YFHQHLAGS.

Belongs to the TMEM161 family.

It localises to the membrane. Functionally, may play a role in protection against oxidative stress. Overexpression leads to reduced levels of oxidant-induced DNA damage and apoptosis. The protein is Transmembrane protein 161A (TMEM161A) of Homo sapiens (Human).